Consider the following 197-residue polypeptide: Cytochrome c oxidase polypeptide 5, mitochondrial (197 aa).

The N-terminal 13 residues, 1–13, are a transit peptide targeting the mitochondrion; the sequence is MFLRSVTRAAARS. The Mitochondrial matrix portion of the chain corresponds to 14 to 129; the sequence is SAVPTTGLRS…KGENLKIFFK (116 aa). Residues 130-147 form a helical membrane-spanning segment; sequence VAQLTLVSFGIFYVIHLF. Over 148 to 197 the chain is Mitochondrial intermembrane; sequence AKPQPKTMTKEWQEASNEYAKQEKINPIYGISAEGYEGKGFVQSPPAEKQ.

Belongs to the cytochrome c oxidase IV family. In terms of assembly, component of the cytochrome c oxidase (complex IV, CIV), a multisubunit enzyme composed of a catalytic core of 3 subunits and seevral supernumerary subunits. The complex exists as a monomer or a dimer and forms supercomplexes (SCs) in the inner mitochondrial membrane with ubiquinol-cytochrome c oxidoreductase (cytochrome b-c1 complex, complex III, CIII).

Its subcellular location is the mitochondrion inner membrane. It functions in the pathway energy metabolism; oxidative phosphorylation. In terms of biological role, component of the cytochrome c oxidase, the last enzyme in the mitochondrial electron transport chain which drives oxidative phosphorylation. The respiratory chain contains 3 multisubunit complexes succinate dehydrogenase (complex II, CII), ubiquinol-cytochrome c oxidoreductase (cytochrome b-c1 complex, complex III, CIII) and cytochrome c oxidase (complex IV, CIV), that cooperate to transfer electrons derived from NADH and succinate to molecular oxygen, creating an electrochemical gradient over the inner membrane that drives transmembrane transport and the ATP synthase. Cytochrome c oxidase is the component of the respiratory chain that catalyzes the reduction of oxygen to water. Electrons originating from reduced cytochrome c in the intermembrane space (IMS) are transferred via the dinuclear copper A center (CU(A)) of subunit 2 and heme A of subunit 1 to the active site in subunit 1, a binuclear center (BNC) formed by heme A3 and copper B (CU(B)). The BNC reduces molecular oxygen to 2 water molecules using 4 electrons from cytochrome c in the IMS and 4 protons from the mitochondrial matrix. In Aspergillus niger, this protein is Cytochrome c oxidase polypeptide 5, mitochondrial (cox5).